Here is a 901-residue protein sequence, read N- to C-terminus: Cyanophycin synthetase (901 aa).

An ATP-grasp domain is found at 224–478 (KRILAASGVP…VAGAVMDMLF (255 aa)). Residue 493 to 499 (GTNGKTT) participates in ATP binding.

The protein in the C-terminal section; belongs to the MurCDEF family. As to quaternary structure, homodimer.

The catalysed reaction is [L-4-(L-arginin-2-N-yl)aspartate](n) + L-aspartate + ATP = [L-4-(L-arginin-2-N-yl)aspartate](n)-L-aspartate + ADP + phosphate + H(+). It carries out the reaction [L-4-(L-arginin-2-N-yl)aspartate](n)-L-aspartate + L-arginine + ATP = [L-4-(L-arginin-2-N-yl)aspartate](n+1) + ADP + phosphate + H(+). Functionally, catalyzes the ATP-dependent polymerization of arginine and aspartate to multi-L-arginyl-poly-L-aspartic acid (cyanophycin; a water-insoluble reserve polymer). This Nostoc sp. (strain PCC 7120 / SAG 25.82 / UTEX 2576) protein is Cyanophycin synthetase (cphA).